Consider the following 167-residue polypeptide: Transmembrane protein 229B (167 aa).

At 1–14 the chain is on the cytoplasmic side; sequence MASAEPLTALSRWY. Residues 15–35 traverse the membrane as a helical segment; that stretch reads LYAIHGYFCEVMFTAAWEFVV. Over 36–40 the chain is Extracellular; that stretch reads NFNWK. Residues 41 to 61 form a helical membrane-spanning segment; that stretch reads FPGVTSVWALFIYGTSILIVE. Topologically, residues 62 to 73 are cytoplasmic; that stretch reads RMYLRLRGRCPL. A helical membrane pass occupies residues 74-94; that stretch reads LLRCLIYTLWTYLWEFTTGFI. The Extracellular portion of the chain corresponds to 95–111; it reads LRQFNACPWDYSQFDFD. Residues 112 to 132 traverse the membrane as a helical segment; the sequence is FMGLITLEYAVPWFCGALLVE. Topologically, residues 133–167 are cytoplasmic; the sequence is QFVIRNTLRLRFDKDAEPGEPSGALALANGHVKTD.

It belongs to the TMEM229 family.

It localises to the membrane. This Bos taurus (Bovine) protein is Transmembrane protein 229B (TMEM229B).